The sequence spans 870 residues: Eukaryotic translation initiation factor 3 subunit C (870 aa).

Positions 1-92 are disordered; it reads MSRFFRGDSS…GVKVVKSAKN (92 aa). Positions 14–54 are enriched in acidic residues; the sequence is SSDEEEDLYSDDEEVQEQPEEESEEDDSEEDDDDDDSDSSS. The PCI domain occupies 608–782; the sequence is FHMHINLELL…SSIIFRKGVE (175 aa). The interval 807–870 is disordered; it reads TLETRTQGTA…ALGAAVGSRA (64 aa). A compositionally biased stretch (gly residues) spans 824–844; the sequence is GRGGRGGNRGGRGGNRGGRGG.

This sequence belongs to the eIF-3 subunit C family. In terms of assembly, component of the eukaryotic translation initiation factor 3 (eIF-3) complex.

Its subcellular location is the cytoplasm. In terms of biological role, component of the eukaryotic translation initiation factor 3 (eIF-3) complex, which is involved in protein synthesis of a specialized repertoire of mRNAs and, together with other initiation factors, stimulates binding of mRNA and methionyl-tRNAi to the 40S ribosome. The eIF-3 complex specifically targets and initiates translation of a subset of mRNAs involved in cell proliferation. This is Eukaryotic translation initiation factor 3 subunit C (nip1) from Sclerotinia sclerotiorum (strain ATCC 18683 / 1980 / Ss-1) (White mold).